Consider the following 447-residue polypeptide: Bifunctional protein GlmU (447 aa).

The tract at residues 1–225 (MLTVAILAAG…NGELQGINNR (225 aa)) is pyrophosphorylase. Residues 7-10 (LAAG), Lys-21, Gln-73, and 78-79 (GT) contribute to the UDP-N-acetyl-alpha-D-glucosamine site. Asp-103 contacts Mg(2+). UDP-N-acetyl-alpha-D-glucosamine contacts are provided by Gly-140, Glu-154, Asn-169, and Asn-223. Asn-223 contributes to the Mg(2+) binding site. Positions 226–246 (VQLSKCEETIQNLIKEKHMLG) are linker. Residues 247 to 447 (GVTFINPASC…QVNIENWKKN (201 aa)) are N-acetyltransferase. Residues Arg-328 and Lys-346 each contribute to the UDP-N-acetyl-alpha-D-glucosamine site. His-358 functions as the Proton acceptor in the catalytic mechanism. Positions 361 and 372 each coordinate UDP-N-acetyl-alpha-D-glucosamine. Positions 375, 418, and 435 each coordinate acetyl-CoA.

This sequence in the N-terminal section; belongs to the N-acetylglucosamine-1-phosphate uridyltransferase family. In the C-terminal section; belongs to the transferase hexapeptide repeat family. As to quaternary structure, homotrimer. Requires Mg(2+) as cofactor.

The protein localises to the cytoplasm. The catalysed reaction is alpha-D-glucosamine 1-phosphate + acetyl-CoA = N-acetyl-alpha-D-glucosamine 1-phosphate + CoA + H(+). The enzyme catalyses N-acetyl-alpha-D-glucosamine 1-phosphate + UTP + H(+) = UDP-N-acetyl-alpha-D-glucosamine + diphosphate. It functions in the pathway nucleotide-sugar biosynthesis; UDP-N-acetyl-alpha-D-glucosamine biosynthesis; N-acetyl-alpha-D-glucosamine 1-phosphate from alpha-D-glucosamine 6-phosphate (route II): step 2/2. The protein operates within nucleotide-sugar biosynthesis; UDP-N-acetyl-alpha-D-glucosamine biosynthesis; UDP-N-acetyl-alpha-D-glucosamine from N-acetyl-alpha-D-glucosamine 1-phosphate: step 1/1. Its pathway is bacterial outer membrane biogenesis; LPS lipid A biosynthesis. Functionally, catalyzes the last two sequential reactions in the de novo biosynthetic pathway for UDP-N-acetylglucosamine (UDP-GlcNAc). The C-terminal domain catalyzes the transfer of acetyl group from acetyl coenzyme A to glucosamine-1-phosphate (GlcN-1-P) to produce N-acetylglucosamine-1-phosphate (GlcNAc-1-P), which is converted into UDP-GlcNAc by the transfer of uridine 5-monophosphate (from uridine 5-triphosphate), a reaction catalyzed by the N-terminal domain. This chain is Bifunctional protein GlmU, found in Prochlorococcus marinus (strain MIT 9515).